The primary structure comprises 447 residues: Chromosomal replication initiator protein DnaA (447 aa).

The interval 1-74 is domain I, interacts with DnaA modulators; that stretch reads MPDVESFWHS…TGFKLTGAEV (74 aa). A domain II region spans residues 74–109; that stretch reads VMPHFVVADEKDAALAQELEEPAEEEVVFSEQSKKA. The domain III, AAA+ region stretch occupies residues 110-326; the sequence is MLNPKYTFDT…GALVRVQAFA (217 aa). Residues Gly-154, Gly-156, Lys-157, and Thr-158 each contribute to the ATP site. The domain IV, binds dsDNA stretch occupies residues 327–447; the sequence is TINGEDITTS…VSEIKNLLNS (121 aa).

It belongs to the DnaA family. In terms of assembly, oligomerizes as a right-handed, spiral filament on DNA at oriC.

The protein localises to the cytoplasm. Functionally, plays an essential role in the initiation and regulation of chromosomal replication. ATP-DnaA binds to the origin of replication (oriC) to initiate formation of the DNA replication initiation complex once per cell cycle. Binds the DnaA box (a 9 base pair repeat at the origin) and separates the double-stranded (ds)DNA. Forms a right-handed helical filament on oriC DNA; dsDNA binds to the exterior of the filament while single-stranded (ss)DNA is stabiized in the filament's interior. The ATP-DnaA-oriC complex binds and stabilizes one strand of the AT-rich DNA unwinding element (DUE), permitting loading of DNA polymerase. After initiation quickly degrades to an ADP-DnaA complex that is not apt for DNA replication. Binds acidic phospholipids. Strand separation requires the DnaA boxes and adjacent DnaA-trio motifs as well as ATP. The chain is Chromosomal replication initiator protein DnaA from Enterococcus faecalis (strain ATCC 700802 / V583).